The sequence spans 683 residues: DNA ligase (683 aa).

Residues 35–39, 84–85, and glutamate 115 contribute to the NAD(+) site; these read DADYD and SL. Lysine 117 functions as the N6-AMP-lysine intermediate in the catalytic mechanism. The NAD(+) site is built by arginine 138, glutamate 175, lysine 293, and lysine 317. Positions 411, 414, 429, and 435 each coordinate Zn(2+). A BRCT domain is found at 598–683; that stretch reads QTNSAVSGKT…LQNISTGAQQ (86 aa).

This sequence belongs to the NAD-dependent DNA ligase family. LigA subfamily. The cofactor is Mg(2+). It depends on Mn(2+) as a cofactor.

It catalyses the reaction NAD(+) + (deoxyribonucleotide)n-3'-hydroxyl + 5'-phospho-(deoxyribonucleotide)m = (deoxyribonucleotide)n+m + AMP + beta-nicotinamide D-nucleotide.. Its function is as follows. DNA ligase that catalyzes the formation of phosphodiester linkages between 5'-phosphoryl and 3'-hydroxyl groups in double-stranded DNA using NAD as a coenzyme and as the energy source for the reaction. It is essential for DNA replication and repair of damaged DNA. This Nitrosomonas eutropha (strain DSM 101675 / C91 / Nm57) protein is DNA ligase.